We begin with the raw amino-acid sequence, 863 residues long: MRTDTPQAVNLADYRPFPFAIETTRLVFDLHPTRTRVSAELSVRRTGGKNEPLVLNGERLKLVSIAIDGRPLAAGEYGVDAERLTIAEAPDAFVLTTEVEIDPSSNKALMGLYMSGGRFCTQCEAEGFRTITYFPDRPDVLSRYSVRIEADGKFPHLLSNGNPVASGSLDGGRHFAEWSDPFPKPSYLFALVAGDLDVLADKFITMSGREVALRVFVDPGQASRAAYALDSLKRAMKWDEEAFGREYDLDLFMIVAVRDFNFGAMENKGLNIFNSSLLLADPQTATDLDYERIEAVVAHEYFHNWTGNRITCRDWFQLCLKEGFTVFRDQGLSADMRGAAVQRIKDVRALRARQFAEDAGPLAHPVRPSSYLKIDNFYTATIYEKGAEIIRMLKAILGAPAFRKGCDLYFQRHDGEATTVEAFIACFAEASGRDLSGFFGWYEQAGTPSVTIETAYDAAAGALTLTLTQSTSPTPGQPDKKPLPIPIAIGLLAADGRVLRDTEIVLLDQAQMTVRWDSIPEPPVLSALRGFSAPVNLSTDARPSDRYVLFGSDTDLFNRWEAGQTLARDLILTRAAGAPDEVGEERYADALGRALVDDAAEPAFKALLLALPSEPDLALMFEAADPAALHAARDHLRTRIAVHLGDLLRRLHGEMQINGEFSSDAAAAGRRALRNACAEALSADPHAENLARLLGHFGAARNMTDMIGGLYPMVAMGGVPREKALESFHHAWRTEPLVLDKWFAVQGRDPNPDALERVIALTQHPDFEPTNPNRLRALVSTFANFNPARFHDPSGAGYAFLADEILKVDAFNPMTAARLVEPLGGWRRYKPELGDLMRAQLERIVAHPNLSKNVLELASKALG.

Substrate contacts are provided by residues E124 and 263–267 (GAMEN). H299 serves as a coordination point for Zn(2+). The active-site Proton acceptor is the E300. Positions 303 and 322 each coordinate Zn(2+).

The protein belongs to the peptidase M1 family. Requires Zn(2+) as cofactor.

It catalyses the reaction Release of an N-terminal amino acid, Xaa-|-Yaa- from a peptide, amide or arylamide. Xaa is preferably Ala, but may be most amino acids including Pro (slow action). When a terminal hydrophobic residue is followed by a prolyl residue, the two may be released as an intact Xaa-Pro dipeptide.. Its function is as follows. Aminopeptidase N is involved in the degradation of intracellular peptides generated by protein breakdown during normal growth as well as in response to nutrient starvation. This is Aminopeptidase N (pepN) from Caulobacter vibrioides (strain ATCC 19089 / CIP 103742 / CB 15) (Caulobacter crescentus).